The following is a 136-amino-acid chain: Large ribosomal subunit protein bL17 (136 aa).

Belongs to the bacterial ribosomal protein bL17 family. Part of the 50S ribosomal subunit. Contacts protein L32.

The protein is Large ribosomal subunit protein bL17 of Rickettsia peacockii (strain Rustic).